We begin with the raw amino-acid sequence, 113 residues long: Cytochrome c (113 aa).

Residues Cys-21, Cys-24, His-25, and Met-90 each coordinate heme c.

It belongs to the cytochrome c family. Binds 1 heme c group covalently per subunit.

The protein localises to the mitochondrion intermembrane space. In terms of biological role, electron carrier protein. The oxidized form of the cytochrome c heme group can accept an electron from the heme group of the cytochrome c1 subunit of cytochrome reductase. Cytochrome c then transfers this electron to the cytochrome oxidase complex, the final protein carrier in the mitochondrial electron-transport chain. This chain is Cytochrome c (cytC), found in Dictyostelium discoideum (Social amoeba).